Consider the following 61-residue polypeptide: MAKKSMIAKQKRTPKFKVQEYTRCERCGRPHSVYRKFKLCRICFRELAYKGQIPGVKKASW.

Positions 24, 27, 40, and 43 each coordinate Zn(2+).

Belongs to the universal ribosomal protein uS14 family. Zinc-binding uS14 subfamily. Part of the 30S ribosomal subunit. Contacts proteins S3 and S10. It depends on Zn(2+) as a cofactor.

In terms of biological role, binds 16S rRNA, required for the assembly of 30S particles and may also be responsible for determining the conformation of the 16S rRNA at the A site. The chain is Small ribosomal subunit protein uS14 from Bacillus anthracis (strain A0248).